The following is a 317-amino-acid chain: MLSCLLRNDKRLEVFFSSLDMKKSYLLALSGGSDSLFLLYLLKSRGVSFIAVHVDYGWRESSYREAEELELRCQAEGVPIIVDHVPPEYRTSRDQENAARRYRYALFHKVCQKKNLSGIFLAHHANDQAETVLKRVLEGAHLSNLKGMRGEVYYEGIPILRPLLHIPKIVLSRTLDAANIHYVHDITNTDERYLRARMRNKIFPWLEEIFGKNITQPLLTLAQDSEELSCYMKQQAQPFLEKIRKENTTLSLEIPKTLIEQVFLTKWVCKEFFYSAGIVASRHFLQTVYDHLNRGLPAQMRLRNKRVIVKAGVVMIE.

Residue 30–35 (SGGSDS) coordinates ATP.

It belongs to the tRNA(Ile)-lysidine synthase family.

The protein localises to the cytoplasm. It catalyses the reaction cytidine(34) in tRNA(Ile2) + L-lysine + ATP = lysidine(34) in tRNA(Ile2) + AMP + diphosphate + H(+). Its function is as follows. Ligates lysine onto the cytidine present at position 34 of the AUA codon-specific tRNA(Ile) that contains the anticodon CAU, in an ATP-dependent manner. Cytidine is converted to lysidine, thus changing the amino acid specificity of the tRNA from methionine to isoleucine. The protein is tRNA(Ile)-lysidine synthase of Chlamydia felis (strain Fe/C-56) (Chlamydophila felis).